The primary structure comprises 803 residues: Cation channel sperm-associated auxiliary subunit delta (803 aa).

The N-terminal stretch at 1-15 is a signal peptide; sequence MLMLMLAAVATVVRA. The Extracellular portion of the chain corresponds to 16–720; that stretch reads QTVCRFRTVR…ALPVAEFRPM (705 aa). Intrachain disulfides connect Cys-19/Cys-365, Cys-55/Cys-142, Cys-141/Cys-148, Cys-383/Cys-492, Cys-506/Cys-698, Cys-521/Cys-568, and Cys-620/Cys-648. N-linked (GlcNAc...) asparagine glycosylation is found at Asn-226, Asn-418, Asn-436, Asn-468, Asn-534, Asn-545, and Asn-626. A helical transmembrane segment spans residues 721 to 742; sequence TSILLMVTVTLFTMWLAYAIPK. Over 743 to 803 the chain is Cytoplasmic; it reads QLRTERGRRL…QIGKKPDIKK (61 aa). The tract at residues 782 to 803 is disordered; that stretch reads SRRVKDQPEKIPQIGKKPDIKK.

This sequence belongs to the CATSPERD family. In terms of assembly, component of the CatSper complex or CatSpermasome composed of the core pore-forming members CATSPER1, CATSPER2, CATSPER3 and CATSPER4 as well as auxiliary members CATSPERB, CATSPERG, CATSPERD, CATSPERE, CATSPERZ, C2CD6/CATSPERT, SLCO6C1, TMEM249, TMEM262 and EFCAB9. HSPA1 may be an additional auxiliary complex member. The core complex members CATSPER1, CATSPER2, CATSPER3 and CATSPER4 form a heterotetrameric channel. The auxiliary CATSPERB, CATSPERG, CATSPERD and CATSPERE subunits form a pavilion-like structure over the pore which stabilizes the complex through interactions with CATSPER4, CATSPER3, CATSPER1 and CATSPER2 respectively. SLCO6C1 interacts with CATSPERE and TMEM262/CATSPERH interacts with CATSPERB, further stabilizing the complex. C2CD6/CATSPERT interacts at least with CATSPERD and is required for targeting the CatSper complex in the flagellar membrane.

It localises to the cell projection. Its subcellular location is the cilium. The protein localises to the flagellum membrane. Its function is as follows. Auxiliary component of the CatSper complex, a complex involved in sperm cell hyperactivation. Sperm cell hyperactivation is needed for sperm motility which is essential late in the preparation of sperm for fertilization. Required for CATSPER1 stability before intraflagellar transport and/or incorporation of the CatSper complex channel into the flagellar membrane. In Rattus norvegicus (Rat), this protein is Cation channel sperm-associated auxiliary subunit delta.